A 26-amino-acid chain; its full sequence is Dermaseptin-J3 (26 aa).

Valine amide is present on V26.

In terms of tissue distribution, expressed by the skin glands.

The protein resides in the secreted. In terms of biological role, has antimicrobial activity. The sequence is that of Dermaseptin-J3 from Phasmahyla jandaia (Jandaia leaf frog).